A 1392-amino-acid chain; its full sequence is DNA-directed RNA polymerase subunit beta (1392 aa).

The protein belongs to the RNA polymerase beta chain family. The RNAP catalytic core consists of 2 alpha, 1 beta, 1 beta' and 1 omega subunit. When a sigma factor is associated with the core the holoenzyme is formed, which can initiate transcription.

It carries out the reaction RNA(n) + a ribonucleoside 5'-triphosphate = RNA(n+1) + diphosphate. Its function is as follows. DNA-dependent RNA polymerase catalyzes the transcription of DNA into RNA using the four ribonucleoside triphosphates as substrates. The chain is DNA-directed RNA polymerase subunit beta from Neisseria meningitidis serogroup A / serotype 4A (strain DSM 15465 / Z2491).